A 1893-amino-acid polypeptide reads, in one-letter code: Protein TIC 214 (1893 aa).

6 helical membrane-spanning segments follow: residues Ile18–Gly38, Ala63–Leu83, Leu87–Trp107, Leu127–Leu147, Val175–Ile195, and Ile224–Ile244. Basic and acidic residues-rich tracts occupy residues Met249–Arg258 and Glu268–Glu287. Residues Met249 to Glu317 form a disordered region. The segment covering Glu298 to Glu309 has biased composition (acidic residues). A helical membrane pass occupies residues Leu1126 to Ile1146.

Belongs to the TIC214 family. As to quaternary structure, part of the Tic complex.

Its subcellular location is the plastid. It localises to the chloroplast inner membrane. Functionally, involved in protein precursor import into chloroplasts. May be part of an intermediate translocation complex acting as a protein-conducting channel at the inner envelope. The protein is Protein TIC 214 of Vitis vinifera (Grape).